Consider the following 424-residue polypeptide: GTPase HflX (424 aa).

One can recognise a Hflx-type G domain in the interval 194 to 364; the sequence is YTVALTGYTG…AVVEMLPEKV (171 aa). GTP contacts are provided by residues 200-207, 225-229, 246-249, 314-317, and 342-344; these read GYTGAGKT, FATLS, DTIG, NKID, and SAA. Positions 207 and 227 each coordinate Mg(2+).

The protein belongs to the TRAFAC class OBG-HflX-like GTPase superfamily. HflX GTPase family. Monomer. Associates with the 50S ribosomal subunit. Mg(2+) serves as cofactor.

The protein localises to the cytoplasm. In terms of biological role, GTPase that associates with the 50S ribosomal subunit and may have a role during protein synthesis or ribosome biogenesis. In Thermofilum pendens (strain DSM 2475 / Hrk 5), this protein is GTPase HflX.